A 175-amino-acid chain; its full sequence is Large ribosomal subunit protein uL10 (175 aa).

This sequence belongs to the universal ribosomal protein uL10 family. In terms of assembly, part of the ribosomal stalk of the 50S ribosomal subunit. The N-terminus interacts with L11 and the large rRNA to form the base of the stalk. The C-terminus forms an elongated spine to which L12 dimers bind in a sequential fashion forming a multimeric L10(L12)X complex.

Its function is as follows. Forms part of the ribosomal stalk, playing a central role in the interaction of the ribosome with GTP-bound translation factors. This is Large ribosomal subunit protein uL10 from Prochlorococcus marinus subsp. pastoris (strain CCMP1986 / NIES-2087 / MED4).